The primary structure comprises 209 residues: Neurotrophin-4 (209 aa).

Residues 1 to 21 (MLPRHSCSLLLFLLLLPSVPM) form the signal peptide. Positions 22–79 (EPQPPSSTLPPFLAPEWDLLSPRVALSRGTPAGPPLLFLLEAGAYGEPAGAPANRSRR) are excised as a propeptide. The N-linked (GlcNAc...) asparagine glycan is linked to asparagine 75. Disulfide bonds link cysteine 96/cysteine 169, cysteine 140/cysteine 198, and cysteine 157/cysteine 200.

Belongs to the NGF-beta family. In terms of tissue distribution, expressed in thymus, muscle, ovary, brain, heart, stomach and kidney. Expressed in both embryo and adult tissues.

Its subcellular location is the secreted. In terms of biological role, target-derived survival factor for peripheral sensory sympathetic neurons. May promote ameloblast differentiation and subsequent reduction in proliferation of ameloblasts. In Rattus norvegicus (Rat), this protein is Neurotrophin-4 (Ntf4).